The primary structure comprises 276 residues: B3 domain-containing protein REM22 (276 aa).

Residues 11–115 (SETMSIQDTV…VFHFCVYEYG (105 aa)) constitute a DNA-binding region (TF-B3). The disordered stretch occupies residues 141–164 (GNEESTKGLEESPRRGGTSRRRAK). Residues 144–154 (ESTKGLEESPR) show a composition bias toward basic and acidic residues.

It is found in the nucleus. In Arabidopsis thaliana (Mouse-ear cress), this protein is B3 domain-containing protein REM22 (REM22).